We begin with the raw amino-acid sequence, 774 residues long: Transmembrane GTPase fzo-1 (774 aa).

The interval Met1 to Arg29 is disordered. Topologically, residues Met1–Val617 are cytoplasmic. Basic residues predominate over residues Arg20–Arg29. Positions Tyr51 to Asn71 form a coiled coil. Residues Gln97 to Glu352 enclose the Dynamin-type G domain. Positions Gly107–Ser114 are G1 motif. Ser110 to Thr115 contributes to the GTP binding site. Positions Thr133 to Thr134 are G2 motif. The tract at residues Asp211–Gly214 is G3 motif. Position 270–273 (Asn270–Asp273) interacts with GTP. Positions Asn270 to Asp273 are G4 motif. A region of interest (G5 motif) is located at residue Glu300. Ser317 is a GTP binding site. Residues Asn385 to Arg415 adopt a coiled-coil conformation. The helical transmembrane segment at Leu618 to Val638 threads the bilayer. The Mitochondrial intermembrane segment spans residues Tyr639–Lys640. Residues Ala641–Glu661 traverse the membrane as a helical segment. Over Arg662–Pro774 the chain is Cytoplasmic.

Belongs to the TRAFAC class dynamin-like GTPase superfamily. Dynamin/Fzo/YdjA family. Mitofusin subfamily. In terms of assembly, interacts with ced-9; interaction may be suppressed by interaction of ced-9 with egl-1.

The protein localises to the mitochondrion outer membrane. It catalyses the reaction GTP + H2O = GDP + phosphate + H(+). Its function is as follows. Probable transmembrane GTPase. Mediates mitochondrial fusion. Fusion of mitochondria occurs in many cell types and constitutes an important step in mitochondria morphology, which is balanced between fusion and fission. Dispensable for normal apoptotic processes during embryonic development. In Caenorhabditis elegans, this protein is Transmembrane GTPase fzo-1.